A 345-amino-acid chain; its full sequence is Beta-2-glycoprotein 1 (345 aa).

The signal sequence occupies residues 1 to 19 (MISLGLILFSSVLCHVATA). Sushi domains lie at 21 to 81 (RTCP…RCIP), 82 to 139 (RVCP…VCTR), 140 to 202 (VTCP…ECRE), and 203 to 262 (VKCP…SCKA). 11 disulfides stabilise this stretch: Cys-23-Cys-66, Cys-51-Cys-79, Cys-84-Cys-124, Cys-110-Cys-137, Cys-142-Cys-188, Cys-174-Cys-200, Cys-205-Cys-248, Cys-234-Cys-260, Cys-264-Cys-315, Cys-300-Cys-325, and Cys-307-Cys-345. Thr-33 carries O-linked (GalNAc...) threonine glycosylation. 4 N-linked (GlcNAc...) asparagine glycosylation sites follow: Asn-117, Asn-162, Asn-183, and Asn-193. N-linked (GlcNAc...) asparagine glycosylation occurs at Asn-253. The interval 263-345 (SCKLSVKKAT…KTDASDVKPC (83 aa)) is sushi-like.

In terms of tissue distribution, expressed by the liver and secreted in plasma.

The protein resides in the secreted. Functionally, binds to various kinds of negatively charged substances such as heparin, phospholipids, and dextran sulfate. May prevent activation of the intrinsic blood coagulation cascade by binding to phospholipids on the surface of damaged cells. The polypeptide is Beta-2-glycoprotein 1 (APOH) (Canis lupus familiaris (Dog)).